Here is a 696-residue protein sequence, read N- to C-terminus: Macrolide export ATP-binding/permease protein MacB (696 aa).

An ABC transporter domain is found at 6 to 244 (IELKNIERYH…KPQNKRTFID (239 aa)). 42–49 (GASGSGKS) serves as a coordination point for ATP. Residues 254 to 287 (HNTEKLNRPNEKNNIDNDNKENNNGYNRNDNSFL) form a disordered region. Basic and acidic residues predominate over residues 255–274 (NTEKLNRPNEKNNIDNDNKE). Over residues 275-284 (NNNGYNRNDN) the composition is skewed to low complexity. Helical transmembrane passes span 324-344 (FLTM…IALG), 576-596 (IAFI…LVSV), 626-646 (MVSL…GGLF), and 659-679 (LSSF…FGYF).

This sequence belongs to the ABC transporter superfamily. Macrolide exporter (TC 3.A.1.122) family. As to quaternary structure, homodimer. Part of the tripartite efflux system MacAB-TolC, which is composed of an inner membrane transporter, MacB, a periplasmic membrane fusion protein, MacA, and an outer membrane component, TolC. The complex forms a large protein conduit and can translocate molecules across both the inner and outer membranes. Interacts with MacA.

The protein localises to the cell inner membrane. In terms of biological role, part of the tripartite efflux system MacAB-TolC. MacB is a non-canonical ABC transporter that contains transmembrane domains (TMD), which form a pore in the inner membrane, and an ATP-binding domain (NBD), which is responsible for energy generation. Confers resistance against macrolides. This is Macrolide export ATP-binding/permease protein MacB from Haemophilus ducreyi (strain 35000HP / ATCC 700724).